The chain runs to 130 residues: MKLKGRKIVGGKAEGELIVSQKPLSFLGGVDPNTGIVTDAESDIRGQSIAGKVLAFPRGKGSTVGSYVIYALKKNGKAPKAIIVGEAETIVATGAIIAGIPMVDGIDVSKLKSGQRVRVKADEGLVEVEE.

S62 functions as the Proton acceptor in the catalytic mechanism.

Belongs to the AcnX type II small subunit family. Heterodimer composed of a large subunit (PMDh-L) and a small subunit (PMDh-S).

It catalyses the reaction (R)-5-phosphomevalonate = (2E)-3-methyl-5-phosphooxypent-2-enoate + H2O. The protein operates within isoprenoid biosynthesis; isopentenyl diphosphate biosynthesis via mevalonate pathway. In terms of biological role, component of a hydro-lyase that catalyzes the dehydration of mevalonate 5-phosphate (MVA5P) to form trans-anhydromevalonate 5-phosphate (tAHMP). Involved in the archaeal mevalonate (MVA) pathway, which provides fundamental precursors for isoprenoid biosynthesis, such as isopentenyl diphosphate (IPP) and dimethylallyl diphosphate (DMAPP). This Thermococcus onnurineus (strain NA1) protein is Phosphomevalonate dehydratase small subunit.